The primary structure comprises 145 residues: uncharacterized protein (145 aa).

An N-acetylmethionine modification is found at Met1. The tract at residues 15–41 (QLKNNSGGTNGDRNSGANNGGGENSAP) is disordered. Residues 16–27 (LKNNSGGTNGDR) show a composition bias toward polar residues. Phosphoserine occurs at positions 121 and 126. The disordered stretch occupies residues 125-145 (NSFDKQNAKNDDDEDDDDFFD). Positions 135 to 145 (DDDEDDDDFFD) are enriched in acidic residues.

Belongs to the PDCD5 family.

This is an uncharacterized protein from Saccharomyces cerevisiae (strain ATCC 204508 / S288c) (Baker's yeast).